We begin with the raw amino-acid sequence, 338 residues long: Methionine import ATP-binding protein MetN 1 (338 aa).

One can recognise an ABC transporter domain in the interval 2-241 (IELHQVSKSF…AKHATTKRFV (240 aa)). Position 38–45 (38–45 (GYSGAGKS)) interacts with ATP.

Belongs to the ABC transporter superfamily. Methionine importer (TC 3.A.1.24) family. As to quaternary structure, the complex is composed of two ATP-binding proteins (MetN), two transmembrane proteins (MetI) and a solute-binding protein (MetQ).

The protein resides in the cell membrane. It carries out the reaction L-methionine(out) + ATP + H2O = L-methionine(in) + ADP + phosphate + H(+). It catalyses the reaction D-methionine(out) + ATP + H2O = D-methionine(in) + ADP + phosphate + H(+). In terms of biological role, part of the ABC transporter complex MetNIQ involved in methionine import. Responsible for energy coupling to the transport system. This is Methionine import ATP-binding protein MetN 1 from Listeria monocytogenes serotype 4b (strain F2365).